The sequence spans 451 residues: Probable metal transport system membrane protein CT_069 (451 aa).

8 consecutive transmembrane segments (helical) span residues 14 to 34, 38 to 58, 70 to 90, 100 to 120, 145 to 165, 192 to 212, 233 to 253, and 269 to 289; these read SFLAVSLICMTTALWGTILLV, PLLSESLSHACYPGLLIGALL, WVIIFFGCLASVLGCLGISFL, SALCLVLVSFFGVGVILVSYV, TEAKLALIIFCLSAVVLWWWY, VLVFISLVIVSGVRSVGILLI, ILILSSIFGGICGALGCYFSV, and ILPTGPLVVFFAGVLVFLCLI. A disordered region spans residues 432 to 451; sequence PDYDPHQREIPKRTRKSDGC. Residues 434 to 451 are compositionally biased toward basic and acidic residues; the sequence is YDPHQREIPKRTRKSDGC.

This sequence belongs to the ABC-3 integral membrane protein family.

The protein localises to the cell inner membrane. Functionally, part of an ATP-driven transport system CT_067/CT_068/CT_069/CT_070 for a metal. The protein is Probable metal transport system membrane protein CT_069 of Chlamydia trachomatis serovar D (strain ATCC VR-885 / DSM 19411 / UW-3/Cx).